Consider the following 602-residue polypeptide: Elongation factor 4 (602 aa).

Residues 7–189 (KYIRNFSIVA…AIVNKVPAPD (183 aa)) enclose the tr-type G domain. Residues 19–24 (DHGKST) and 136–139 (NKID) each bind GTP.

This sequence belongs to the TRAFAC class translation factor GTPase superfamily. Classic translation factor GTPase family. LepA subfamily.

The protein resides in the cell membrane. The enzyme catalyses GTP + H2O = GDP + phosphate + H(+). In terms of biological role, required for accurate and efficient protein synthesis under certain stress conditions. May act as a fidelity factor of the translation reaction, by catalyzing a one-codon backward translocation of tRNAs on improperly translocated ribosomes. Back-translocation proceeds from a post-translocation (POST) complex to a pre-translocation (PRE) complex, thus giving elongation factor G a second chance to translocate the tRNAs correctly. Binds to ribosomes in a GTP-dependent manner. This Clostridium botulinum (strain 657 / Type Ba4) protein is Elongation factor 4.